The primary structure comprises 314 residues: Mitochondrial translation factor 2 (314 aa).

A disordered region spans residues Glu111 to Ile136.

Component of the MRH5C complex, composed of mrh5, ppr4, mtf2, and sls1. Proteins mtf2 and sls1 form a subcomplex that serves as a scaffold to bring mrh5 and ppr4 together. The MRH5C complex associates with the small subunit of the mitochondrial ribosome.

Functionally, translation activation factor that as part of the MRH5C complex specifically recruits cox1 mRNA to the mitochondrial ribosome for translation initiation. The polypeptide is Mitochondrial translation factor 2 (Schizosaccharomyces pombe (strain 972 / ATCC 24843) (Fission yeast)).